The sequence spans 361 residues: Histidinol-phosphate aminotransferase (361 aa).

Lys-219 is modified (N6-(pyridoxal phosphate)lysine).

Belongs to the class-II pyridoxal-phosphate-dependent aminotransferase family. Histidinol-phosphate aminotransferase subfamily. In terms of assembly, homodimer. The cofactor is pyridoxal 5'-phosphate.

It carries out the reaction L-histidinol phosphate + 2-oxoglutarate = 3-(imidazol-4-yl)-2-oxopropyl phosphate + L-glutamate. It functions in the pathway amino-acid biosynthesis; L-histidine biosynthesis; L-histidine from 5-phospho-alpha-D-ribose 1-diphosphate: step 7/9. This chain is Histidinol-phosphate aminotransferase, found in Cereibacter sphaeroides (strain ATCC 17029 / ATH 2.4.9) (Rhodobacter sphaeroides).